Reading from the N-terminus, the 570-residue chain is MDLTTTRQRRPLISDSSSSSSTKSYSKTDKPGRSNGGDAEDGGLRWFLPFIALCYLRYMSATSNIIHDCDEVFNYWEPLHYILYKSGFQTWEYSSNFALRSYLYILFHELAGRPASWWFGDDKVRVFYAVRLFLGLVSAVSDTVLVVALSRKYGKRIATYAVAMLCLTSGCFFASTSFLPSSFSMYAISLSSGLLLFEKYAMAVAVSVVGVILGWPFSILAFLPVVIYSLVKRFKQAFIAGAVTTIFLLGVSLLVDYYYYKRWTSSVLNLLIYNVLGGGESHLYGTEGALFYIRNGFNNFNFCFILAMLFVAIYPVIRRKYDRALLVVISPMYIWLAFMSLQPHKEERFLYPIYPLICVSASAVIENIPELFREKYSSRESLLVTITKYMRPVILGCILCASHSRTFALINGYSAPLEVYKLLEHHDDAGPGSVLCVGSEWHRYPSSFFVPHYISEVRWIDDGFRGLLPFPFNNTLGGTSASPPYFNNKNQASEEQYLKNIETCTFLIELQLSRPYQYRGSDLSTWEAIAVLPYLDRELSPAKYRSFFIPHMWQEKNVFGKYVALRRVPK.

A disordered region spans residues 1 to 37 (MDLTTTRQRRPLISDSSSSSSTKSYSKTDKPGRSNGG). Low complexity predominate over residues 14-25 (SDSSSSSSTKSY). 8 helical membrane-spanning segments follow: residues 129–149 (AVRL…VVAL), 160–180 (YAVA…SFLP), 208–228 (VVGV…VVIY), 237–257 (AFIA…LVDY), 297–317 (FNNF…YPVI), 324–344 (ALLV…LQPH), 349–369 (FLYP…ENIP), and 381–401 (SLLV…ILCA). Asn-473 is a glycosylation site (N-linked (GlcNAc...) asparagine).

The protein belongs to the glycosyltransferase 22 family.

The protein localises to the endoplasmic reticulum membrane. The enzyme catalyses an alpha-D-Man-(1-&gt;2)-alpha-D-Man-(1-&gt;2)-alpha-D-Man-(1-&gt;3)-[alpha-D-Man-(1-&gt;3)-alpha-D-Man-(1-&gt;6)]-beta-D-Man-(1-&gt;4)-beta-D-GlcNAc-(1-&gt;4)-alpha-D-GlcNAc-diphospho-di-trans,poly-cis-dolichol + a di-trans,poly-cis-dolichyl beta-D-mannosyl phosphate = an alpha-D-Man-(1-&gt;2)-alpha-D-Man-(1-&gt;2)-alpha-D-Man-(1-&gt;3)-[alpha-D-Man-(1-&gt;2)-alpha-D-Man-(1-&gt;3)-alpha-D-Man-(1-&gt;6)]-beta-D-Man-(1-&gt;4)-beta-D-GlcNAc-(1-&gt;4)-alpha-D-GlcNAc-diphospho-di-trans,poly-cis-dolichol + a di-trans,poly-cis-dolichyl phosphate + H(+). It carries out the reaction an alpha-D-Man-(1-&gt;2)-alpha-D-Man-(1-&gt;2)-alpha-D-Man-(1-&gt;3)-[alpha-D-Man-(1-&gt;2)-alpha-D-Man-(1-&gt;3)-[alpha-D-Man-(1-&gt;6)]-alpha-D-Man-(1-&gt;6)]-beta-D-Man-(1-&gt;4)-beta-D-GlcNAc-(1-&gt;4)-alpha-D-GlcNAc-diphospho-di-trans,poly-cis-dolichol + a di-trans,poly-cis-dolichyl beta-D-mannosyl phosphate = an alpha-D-Man-(1-&gt;2)-alpha-D-Man-(1-&gt;2)-alpha-D-Man-(1-&gt;3)-[alpha-D-Man-(1-&gt;2)-alpha-D-Man-(1-&gt;3)-[alpha-D-Man-(1-&gt;2)-alpha-D-Man-(1-&gt;6)]-alpha-D-Man-(1-&gt;6)]-beta-D-Man-(1-&gt;4)-beta-D-GlcNAc-(1-&gt;4)-alpha-D-GlcNAc-diphospho-di-trans,poly-cis-dolichol + a di-trans,poly-cis-dolichyl phosphate + H(+). The protein operates within protein modification; protein glycosylation. Mannosyltransferase that operates in the biosynthetic pathway of dolichol-linked oligosaccharides, the glycan precursors employed in protein asparagine (N)-glycosylation. The assembly of dolichol-linked oligosaccharides begins on the cytosolic side of the endoplasmic reticulum membrane and finishes in its lumen. The sequential addition of sugars to dolichol pyrophosphate produces dolichol-linked oligosaccharides containing fourteen sugars, including two GlcNAcs, nine mannoses and three glucoses. Once assembled, the oligosaccharide is transferred from the lipid to nascent proteins by oligosaccharyltransferases. In the lumen of the endoplasmic reticulum, catalyzes the addition of the seventh and ninth alpha-1,2-linked mannose residues to Man(6)GlcNAc(2)-PP-dolichol and Man(8)GlcNAc(2)-PP-dolichol respectively. The chain is Alpha-1,2-mannosyltransferase ALG9 (ALG9) from Arabidopsis thaliana (Mouse-ear cress).